The chain runs to 147 residues: D-aminoacyl-tRNA deacylase (147 aa).

The Gly-cisPro motif, important for rejection of L-amino acids signature appears at 137-138 (GP).

The protein belongs to the DTD family. As to quaternary structure, homodimer.

Its subcellular location is the cytoplasm. It carries out the reaction glycyl-tRNA(Ala) + H2O = tRNA(Ala) + glycine + H(+). The catalysed reaction is a D-aminoacyl-tRNA + H2O = a tRNA + a D-alpha-amino acid + H(+). Functionally, an aminoacyl-tRNA editing enzyme that deacylates mischarged D-aminoacyl-tRNAs. Also deacylates mischarged glycyl-tRNA(Ala), protecting cells against glycine mischarging by AlaRS. Acts via tRNA-based rather than protein-based catalysis; rejects L-amino acids rather than detecting D-amino acids in the active site. By recycling D-aminoacyl-tRNA to D-amino acids and free tRNA molecules, this enzyme counteracts the toxicity associated with the formation of D-aminoacyl-tRNA entities in vivo and helps enforce protein L-homochirality. This chain is D-aminoacyl-tRNA deacylase, found in Acinetobacter baumannii (strain ATCC 17978 / DSM 105126 / CIP 53.77 / LMG 1025 / NCDC KC755 / 5377).